A 396-amino-acid chain; its full sequence is NADH-quinone oxidoreductase subunit D (396 aa).

Belongs to the complex I 49 kDa subunit family. In terms of assembly, NDH-1 is composed of 14 different subunits. Subunits NuoB, C, D, E, F, and G constitute the peripheral sector of the complex.

The protein localises to the cell inner membrane. It catalyses the reaction a quinone + NADH + 5 H(+)(in) = a quinol + NAD(+) + 4 H(+)(out). NDH-1 shuttles electrons from NADH, via FMN and iron-sulfur (Fe-S) centers, to quinones in the respiratory chain. The immediate electron acceptor for the enzyme in this species is believed to be ubiquinone. Couples the redox reaction to proton translocation (for every two electrons transferred, four hydrogen ions are translocated across the cytoplasmic membrane), and thus conserves the redox energy in a proton gradient. The polypeptide is NADH-quinone oxidoreductase subunit D (Mesorhizobium japonicum (strain LMG 29417 / CECT 9101 / MAFF 303099) (Mesorhizobium loti (strain MAFF 303099))).